The chain runs to 120 residues: Movement protein TGB2 (120 aa).

Over 1–16 (MSSTSEPTYQLAPPDS) the chain is Cytoplasmic. A helical membrane pass occupies residues 17–37 (LKQVYLTLAAGFAVGLGIFLL). Residues 38–76 (RTNTLPHTGDNIHHLPHGGCYRDGTKSIRYNSPGVATSS) are Lumenal-facing. Residues 77-97 (NIFLPAVAVLCILALLHVPFF) form a helical membrane-spanning segment. The Cytoplasmic segment spans residues 98-120 (QPDRVRRRCCRFYWCADPHHPTV).

Belongs to the Tymovirales TGBp2 protein family.

Its subcellular location is the host endoplasmic reticulum membrane. In terms of biological role, plays a role in viral cell-to-cell propagation, by facilitating genome transport to neighboring plant cells through plasmosdesmata,. The polypeptide is Movement protein TGB2 (ORF3) (Lolium latent virus (isolate Lolium/USA/US1/-) (LoLV)).